An 88-amino-acid chain; its full sequence is MAASRLPPATLTLKQFVRRQQVLLLYRRILQTIRQVPNDSDRKYLKDWAREEFRRNKSATEEDTIRMMITQGNMQLKELEKTLALAKS.

The N-terminal 19 residues, 1–19 (MAASRLPPATLTLKQFVRR), are a transit peptide targeting the mitochondrion.

The protein belongs to the complex I LYR family.

The protein localises to the mitochondrion. Involved in efficient integration of the N-module into mitochondrial respiratory chain complex I. The protein is LYR motif-containing protein 2 (LYRM2) of Homo sapiens (Human).